A 724-amino-acid polypeptide reads, in one-letter code: Golgin subfamily A member 6-like protein 6 (724 aa).

5 disordered regions span residues Met-1 to Ala-108, Gln-314 to Gln-342, Met-374 to Arg-454, Gln-517 to Arg-548, and Trp-561 to His-724. Positions Leu-15–Thr-29 are enriched in basic residues. Residues Met-39–Pro-60 show a composition bias toward basic and acidic residues. 2 stretches are compositionally biased toward polar residues: residues Gln-61 to Ser-71 and Asn-79 to Gly-91. Positions Ser-94–Ala-108 are enriched in basic and acidic residues. Residues Glu-164 to Met-686 are a coiled coil.

It belongs to the GOLGA6 family.

This chain is Golgin subfamily A member 6-like protein 6 (GOLGA6L6), found in Homo sapiens (Human).